A 249-amino-acid chain; its full sequence is 6-phosphogluconolactonase 3 (249 aa).

This sequence belongs to the glucosamine/galactosamine-6-phosphate isomerase family. 6-phosphogluconolactonase subfamily.

It is found in the cytoplasm. The protein localises to the nucleus. It carries out the reaction 6-phospho-D-glucono-1,5-lactone + H2O = 6-phospho-D-gluconate + H(+). The protein operates within carbohydrate degradation; pentose phosphate pathway; D-ribulose 5-phosphate from D-glucose 6-phosphate (oxidative stage): step 2/3. Functionally, hydrolysis of 6-phosphogluconolactone to 6-phosphogluconate. This is 6-phosphogluconolactonase 3 (SOL3) from Saccharomyces cerevisiae (strain RM11-1a) (Baker's yeast).